Here is a 1413-residue protein sequence, read N- to C-terminus: Sushi, nidogen and EGF-like domain-containing protein 1 (1413 aa).

Residues 1–24 (MRHGVAWALLVAAALGLGARGVRG) form the signal peptide. The NIDO domain occupies 103 to 258 (AFWADVDNRR…GRWAFRIDDA (156 aa)). N-linked (GlcNAc...) asparagine glycans are attached at residues Asn145 and Asn204. 3 consecutive EGF-like domains span residues 268–309 (TTSV…RRCH), 311–347 (DVNE…PTCE), and 349–385 (AQSP…AACE). Disulfide bonds link Cys272-Cys284, Cys278-Cys297, Cys299-Cys308, Cys315-Cys326, Cys320-Cys335, Cys337-Cys346, Cys353-Cys364, Cys358-Cys373, Cys375-Cys384, Cys391-Cys402, Cys396-Cys411, Cys413-Cys422, Cys433-Cys444, Cys438-Cys453, Cys455-Cys464, Cys472-Cys480, Cys474-Cys488, and Cys490-Cys499. A glycan (N-linked (GlcNAc...) asparagine) is linked at Asn292. Residues 352–374 (PCDTKECQHGGQCQVENGSAVCV) form the Follistatin-like 1 domain. Asn368 carries N-linked (GlcNAc...) asparagine glycosylation. Positions 387–423 (DVDDCSPDPCLNGGSCVDLVGNYTCLCAEPFKGLRCE) constitute an EGF-like 4; calcium-binding domain. N-linked (GlcNAc...) asparagine glycosylation is present at Asn408. 2 EGF-like domains span residues 429–465 (VPDA…LDCR) and 468–500 (VPDD…LLCE). An N-linked (GlcNAc...) asparagine glycan is attached at Asn484. Positions 507-530 (PCNMNTQCPDGGYCMEHGGSYLCV) constitute a Follistatin-like 2 domain. N-linked (GlcNAc...) asparagine glycosylation is present at Asn536. EGF-like domains follow at residues 541 to 577 (LPSP…KHCE), 580 to 616 (RPHL…RHCE), 619 to 655 (KPDS…RHCE), and 657 to 693 (APSP…RRCQ). 26 cysteine pairs are disulfide-bonded: Cys545–Cys556, Cys550–Cys565, Cys567–Cys576, Cys584–Cys595, Cys589–Cys604, Cys606–Cys615, Cys623–Cys634, Cys628–Cys643, Cys645–Cys654, Cys661–Cys672, Cys666–Cys681, Cys683–Cys692, Cys698–Cys739, Cys724–Cys751, Cys757–Cys768, Cys762–Cys777, Cys779–Cys788, Cys795–Cys806, Cys800–Cys815, Cys817–Cys826, Cys833–Cys844, Cys838–Cys853, Cys855–Cys864, Cys871–Cys882, Cys876–Cys891, and Cys893–Cys902. A Sushi domain is found at 696–753 (VDCGPPEEVKHATLRFNGTRLGAVALYACDRGYSLSAPSRIRVCQPHGVWSEPPQCLE). N-linked (GlcNAc...) asparagine glycosylation occurs at Asn712. Residues 753–789 (EIDECRSQPCLHGGSCQDRVAGYLCLCSTGYEGAHCE) form the EGF-like 11; calcium-binding domain. The EGF-like 12; calcium-binding domain occupies 791–827 (ERDECRAHPCRNGGSCRNLPGAYVCRCPAGFVGVHCE). EGF-like domains lie at 829–865 (EVDA…YHCE) and 867–903 (VSDP…EDCA). N-linked (GlcNAc...) asparagine glycosylation is present at Asn886. Fibronectin type-III domains lie at 908 to 1006 (PPTA…TRPR), 1007 to 1105 (PVEG…TRPL), and 1106 to 1200 (PPAN…SPRD). 4 N-linked (GlcNAc...) asparagine glycosylation sites follow: Asn977, Asn1015, Asn1109, and Asn1139. Residues 1206 to 1226 (WHQGGHHPRVLKNRPPPARLP) are disordered. Residues 1207 to 1217 (HQGGHHPRVLK) show a composition bias toward basic residues. The 37-residue stretch at 1307 to 1343 (VPGNCSENPCQNGGTCVPGADAHSCDCGPGFKGRRCE) folds into the EGF-like 15 domain. A glycan (N-linked (GlcNAc...) asparagine) is linked at Asn1310. Disulfide bonds link Cys1311–Cys1322, Cys1316–Cys1331, and Cys1333–Cys1342. Residues 1394–1413 (TSLKKTPNRKQSKSQTLEKS) are disordered.

In terms of processing, phosphorylated on serine and threonine residues. Post-translationally, N-glycosylated.

It is found in the secreted. It localises to the extracellular space. The protein resides in the extracellular matrix. In Homo sapiens (Human), this protein is Sushi, nidogen and EGF-like domain-containing protein 1.